Consider the following 163-residue polypeptide: Succinate dehydrogenase assembly factor 2-A, mitochondrial (163 aa).

The transit peptide at 1–23 (MLRQLRLTMDISGWIFLPWRRSM) directs the protein to the mitochondrion.

It belongs to the SDHAF2 family. In terms of assembly, interacts with the flavoprotein subunit within the SDH catalytic dimer.

It localises to the mitochondrion matrix. Functionally, plays an essential role in the assembly of succinate dehydrogenase (SDH), an enzyme complex (also referred to as respiratory complex II) that is a component of both the tricarboxylic acid (TCA) cycle and the mitochondrial electron transport chain, and which couples the oxidation of succinate to fumarate with the reduction of ubiquinone (coenzyme Q) to ubiquinol. Required for flavinylation (covalent attachment of FAD) of the flavoprotein subunit of the SDH catalytic dimer. In Drosophila sechellia (Fruit fly), this protein is Succinate dehydrogenase assembly factor 2-A, mitochondrial.